A 259-amino-acid polypeptide reads, in one-letter code: UPF0246 protein NMCC_0856 (259 aa).

It belongs to the UPF0246 family.

This Neisseria meningitidis serogroup C (strain 053442) protein is UPF0246 protein NMCC_0856.